The sequence spans 119 residues: Ribonuclease P protein component (119 aa).

This sequence belongs to the RnpA family. Consists of a catalytic RNA component (M1 or rnpB) and a protein subunit.

The catalysed reaction is Endonucleolytic cleavage of RNA, removing 5'-extranucleotides from tRNA precursor.. In terms of biological role, RNaseP catalyzes the removal of the 5'-leader sequence from pre-tRNA to produce the mature 5'-terminus. It can also cleave other RNA substrates such as 4.5S RNA. The protein component plays an auxiliary but essential role in vivo by binding to the 5'-leader sequence and broadening the substrate specificity of the ribozyme. This chain is Ribonuclease P protein component, found in Coprothermobacter proteolyticus (strain ATCC 35245 / DSM 5265 / OCM 4 / BT).